The primary structure comprises 412 residues: Phytoene synthase, chloroplastic (412 aa).

Belongs to the phytoene/squalene synthase family. Monomer. Expressed in roots, leaves, flower buds, sepals, petals, lips and lip crests.

The protein localises to the plastid. It is found in the chloroplast. The enzyme catalyses 2 (2E,6E,10E)-geranylgeranyl diphosphate = 15-cis-phytoene + 2 diphosphate. Its pathway is carotenoid biosynthesis; phytoene biosynthesis; all-trans-phytoene from geranylgeranyl diphosphate: step 1/1. Functionally, catalyzes the reaction from prephytoene diphosphate to phytoene. The chain is Phytoene synthase, chloroplastic (PSY) from Oncidium hybrid cultivar (Orchid).